An 83-amino-acid chain; its full sequence is MLSLGFIALGAAVSIAVIVWALLYREYKKIKLQEKIKHIRQRIREREEDSGNESDGDAEWLDGDEEWLVTLLSSSKLDQGNWV.

Residues 1-4 (MLSL) are Extracellular-facing. A helical transmembrane segment spans residues 5–25 (GFIALGAAVSIAVIVWALLYR). The Cytoplasmic segment spans residues 26 to 83 (EYKKIKLQEKIKHIRQRIREREEDSGNESDGDAEWLDGDEEWLVTLLSSSKLDQGNWV). Residues serine 50 and serine 54 each carry the phosphoserine; by host CK2 modification.

The protein belongs to the HIV-1 VPU protein family. In terms of assembly, homopentamer. Interacts with host CD4 and BRTC; these interactions induce proteasomal degradation of CD4. Interacts with host BST2; this interaction leads to the degradation of host BST2. Interacts with host FBXW11. Interacts with host AP1M1; this interaction plays a role in the mistrafficking and subsequent degradation of host BST2. Interacts with host RANBP2; this interaction allows Vpu to down-regulate host BLM sumoylation. Post-translationally, phosphorylated by host CK2. This phosphorylation is necessary for interaction with human BTRC and degradation of CD4.

It is found in the host membrane. Its activity is regulated as follows. Ion channel activity is inhibited by hexamethylene amiloride in vitro. Enhances virion budding by targeting host CD4 and Tetherin/BST2 to proteasome degradation. Degradation of CD4 prevents any unwanted premature interactions between viral Env and its host receptor CD4 in the endoplasmic reticulum. Degradation of antiretroviral protein Tetherin/BST2 is important for virion budding, as BST2 tethers new viral particles to the host cell membrane. Mechanistically, Vpu bridges either CD4 or BST2 to BTRC, a substrate recognition subunit of the Skp1/Cullin/F-box protein E3 ubiquitin ligase, induces their ubiquitination and subsequent proteasomal degradation. The alteration of the E3 ligase specificity by Vpu seems to promote the degradation of host IKBKB, leading to NF-kappa-B down-regulation and subsequent apoptosis. Acts as a viroporin that forms an oligomeric ion channel in membranes. Modulates the host DNA repair mechanisms to promote degradation of nuclear viral cDNA in cells that are already productively infected in order to suppress immune sensing and proviral hyper-integration (superinfection). Manipulates PML-NBs and modulates SUMOylation of host BLM protein thereby enhancing its DNA-end processing activity toward viral unintegrated linear DNA. Also inhibits RAD52-mediated homologous repair of viral cDNA, preventing the generation of dead-end circular forms of single copies of the long terminal repeat and permitting sustained nucleolytic attack. The polypeptide is Protein Vpu (Human immunodeficiency virus type 1 group N (isolate YBF30) (HIV-1)).